A 101-amino-acid polypeptide reads, in one-letter code: NAD(P)H-quinone oxidoreductase subunit 4L, chloroplastic (101 aa).

3 helical membrane-spanning segments follow: residues 2 to 22 (ILEH…YGLI), 32 to 52 (MCLE…SDFF), and 61 to 81 (IFCI…LAIV).

This sequence belongs to the complex I subunit 4L family. NDH is composed of at least 16 different subunits, 5 of which are encoded in the nucleus.

Its subcellular location is the plastid. It localises to the chloroplast thylakoid membrane. It catalyses the reaction a plastoquinone + NADH + (n+1) H(+)(in) = a plastoquinol + NAD(+) + n H(+)(out). The enzyme catalyses a plastoquinone + NADPH + (n+1) H(+)(in) = a plastoquinol + NADP(+) + n H(+)(out). Functionally, NDH shuttles electrons from NAD(P)H:plastoquinone, via FMN and iron-sulfur (Fe-S) centers, to quinones in the photosynthetic chain and possibly in a chloroplast respiratory chain. The immediate electron acceptor for the enzyme in this species is believed to be plastoquinone. Couples the redox reaction to proton translocation, and thus conserves the redox energy in a proton gradient. The chain is NAD(P)H-quinone oxidoreductase subunit 4L, chloroplastic from Crucihimalaya wallichii (Rock-cress).